We begin with the raw amino-acid sequence, 532 residues long: Tyrosine-protein kinase Src-1 (532 aa).

The disordered stretch occupies residues 1 to 52; that stretch reads MGATKSKPREGGPRSRSLDIVEGSHQPFTSLSASQTPNKSLDSHRPPAQPFG. Gly-2 is lipidated: N-myristoyl glycine. Basic and acidic residues predominate over residues 7-19; sequence KPREGGPRSRSLD. Residues 26 to 40 are compositionally biased toward polar residues; sequence QPFTSLSASQTPNKS. Positions 80–141 constitute an SH3 domain; sequence GGVTTFVALY…PSNYVAPSDS (62 aa). In terms of domain architecture, SH2 spans 147–244; the sequence is WYLGKITRRE…GLCHRLTTVC (98 aa). The region spanning 266 to 519 is the Protein kinase domain; sequence LRLELKLGQG…YLQAFLEDYF (254 aa). Residues 272–280 and Lys-294 contribute to the ATP site; that span reads LGQGCFGEV. The active-site Proton acceptor is the Asp-385. Position 415 is a phosphotyrosine; by autocatalysis (Tyr-415).

Belongs to the protein kinase superfamily. Tyr protein kinase family. SRC subfamily.

It is found in the cell membrane. The catalysed reaction is L-tyrosyl-[protein] + ATP = O-phospho-L-tyrosyl-[protein] + ADP + H(+). In Xenopus laevis (African clawed frog), this protein is Tyrosine-protein kinase Src-1 (src-a).